Consider the following 228-residue polypeptide: Elongation factor 1-beta (228 aa).

Positions Ala-74 to Ala-116 are disordered. The segment at Glu-84–Lys-93 is igE-binding. Positions Ala-97–Pro-115 are enriched in acidic residues.

Belongs to the EF-1-beta/EF-1-delta family. EF-1 is composed of 4 subunits: alpha, beta, delta, and gamma.

In terms of biological role, EF-1-beta and EF-1-delta stimulate the exchange of GDP bound to EF-1-alpha to GTP. The sequence is that of Elongation factor 1-beta from Penicillium citrinum.